The primary structure comprises 306 residues: 26S proteasome regulatory subunit RPN11 (306 aa).

The 136-residue stretch at 27–162 (VYISSIALLK…IDAFRLIDTG (136 aa)) folds into the MPN domain. H109, H111, and D122 together coordinate Zn(2+). Residues 109 to 122 (HSHPGFGCWLSSVD) carry the JAMM motif motif.

The protein belongs to the peptidase M67A family.

Acts as a regulatory subunit of the 26 proteasome which is involved in the ATP-dependent degradation of ubiquitinated proteins. The sequence is that of 26S proteasome regulatory subunit RPN11 (RPN11) from Candida glabrata (strain ATCC 2001 / BCRC 20586 / JCM 3761 / NBRC 0622 / NRRL Y-65 / CBS 138) (Yeast).